A 209-amino-acid polypeptide reads, in one-letter code: 8-oxoguanine DNA glycosylase/AP lyase (209 aa).

Active-site residues include Lys-131 and Asp-149.

This sequence belongs to the type-2 OGG1 family.

The enzyme catalyses 2'-deoxyribonucleotide-(2'-deoxyribose 5'-phosphate)-2'-deoxyribonucleotide-DNA = a 3'-end 2'-deoxyribonucleotide-(2,3-dehydro-2,3-deoxyribose 5'-phosphate)-DNA + a 5'-end 5'-phospho-2'-deoxyribonucleoside-DNA + H(+). Functionally, catalyzes the excision of an oxidatively damaged form of guanine (7,8-dihydro-8-oxoguanine = 8-oxoG) from DNA. Also cleaves the DNA backbone at apurinic/apyrimidinic sites (AP sites). This chain is 8-oxoguanine DNA glycosylase/AP lyase, found in Korarchaeum cryptofilum (strain OPF8).